Here is a 578-residue protein sequence, read N- to C-terminus: Vacuolar protein 8 (578 aa).

Residue Gly-2 is the site of N-myristoyl glycine attachment. S-palmitoyl cysteine attachment occurs at residues Cys-4, Cys-5, and Cys-7. Phosphoserine is present on residues Ser-11 and Ser-16. 9 ARM repeats span residues 37-75 (DKDQ…AEIT), 76-114 (EKYV…NLAV), 116-155 (NENK…NLAT), 157-196 (DDNK…NMTH), 198-237 (EENR…NIAV), 239-280 (EANR…NLAS), 282-321 (TSYQ…NISI), 323-363 (PLNE…NLAA), and 407-446 (DVSK…NLCS). Residue Lys-77 forms a Glycyl lysine isopeptide (Lys-Gly) (interchain with G-Cter in ubiquitin) linkage. Lys-515 participates in a covalent cross-link: Glycyl lysine isopeptide (Lys-Gly) (interchain with G-Cter in ubiquitin). Residues 527–557 (SGIDVKNPGSNNNPSSNDNNSNNNDTGSEHQ) are disordered. A compositionally biased stretch (low complexity) spans 533-552 (NPGSNNNPSSNDNNSNNNDT).

The protein belongs to the beta-catenin family. Interacts with NVJ1. Forms heterotetramers of two VAC8 and two NVJ1 or two VAC8 and two ATG13. Palmitoylated on one or more of its N-terminal cysteine residues by PFA3, which is required for vacuole fusion.

It localises to the vacuole membrane. Functions in both vacuole inheritance and protein targeting from the cytoplasm to vacuole (cvt). Involved in the formation of nucleus-vacuole junctions (NVJs) during piecemeal microautophagy of the nucleus (PMN). NVJs are interorganelle interfaces mediated by NVJ1 in the nuclear envelope and VAC8 on the vacuole membrane. Together, NVJ1 and VAC8 form Velcro-like patches through which teardrop-like portions of the nucleus are pinched off into the vacuolar lumen and degraded by the PMN process. This Saccharomyces cerevisiae (strain ATCC 204508 / S288c) (Baker's yeast) protein is Vacuolar protein 8 (VAC8).